The chain runs to 173 residues: RNA pyrophosphohydrolase (173 aa).

A Nudix hydrolase domain is found at 6-149 (GFRANVGIII…KRDVYRKVMK (144 aa)). A Nudix box motif is present at residues 38–59 (GGVDDGETPEEAMYRELYEEVG).

The protein belongs to the Nudix hydrolase family. RppH subfamily. The cofactor is a divalent metal cation.

Accelerates the degradation of transcripts by removing pyrophosphate from the 5'-end of triphosphorylated RNA, leading to a more labile monophosphorylated state that can stimulate subsequent ribonuclease cleavage. The protein is RNA pyrophosphohydrolase of Shewanella woodyi (strain ATCC 51908 / MS32).